The chain runs to 456 residues: MFS-type transporter SLC18B1 (456 aa).

Met-1 carries the N-acetylmethionine modification. Positions 1 to 24 (MEALGDLEGPRAPGGDDPAGSAGE) are disordered. The Cytoplasmic portion of the chain corresponds to 1–33 (MEALGDLEGPRAPGGDDPAGSAGETPGWLSREQ). The span at 10-23 (PRAPGGDDPAGSAG) shows a compositional bias: low complexity. Residue Ser-21 is modified to Phosphoserine. A helical membrane pass occupies residues 34 to 54 (VFVLISAASVNLGSMMCYSIL). Over 55–70 (GPFFPKEAEKKGASNT) the chain is Extracellular. Residues 71-91 (IIGMIFGCFALFELLASLVFG) traverse the membrane as a helical segment. Residues 92–100 (NYLVHIGAK) lie on the Cytoplasmic side of the membrane. The helical transmembrane segment at 101–121 (FMFVAGMFVSGGVTILFGVLD) threads the bilayer. Over 122-127 (RVPDGP) the chain is Extracellular. A helical membrane pass occupies residues 128–148 (VFIAMCFLVRVMDAVSFAAAM). At 149–161 (TASSSILAKAFPN) the chain is on the cytoplasmic side. A helical transmembrane segment spans residues 162 to 184 (NVATVLGSLETFSGLGLILGPPV). Residues 185 to 195 (GGFLYQSFGYE) are Extracellular-facing. A helical membrane pass occupies residues 196-216 (VPFIVLGCVVLLMVPLNMYIL). Residues 217–230 (PNYESDPGEHSFWK) lie on the Cytoplasmic side of the membrane. A helical membrane pass occupies residues 231–251 (LIALPKVGLIAFVINSLSSCF). Over 252-272 (GFLDPTLSLFVLEKFNLPAGY) the chain is Extracellular. The helical transmembrane segment at 273 to 293 (VGLVFLGMALSYAISSPLFGL) threads the bilayer. Residues 294–304 (LSDKRPPLRKW) are Cytoplasmic-facing. The helical transmembrane segment at 305-325 (LLVFGNLITAGCYMLLGPVPI) threads the bilayer. Residues 326-331 (LHIKSQ) lie on the Extracellular side of the membrane. A helical transmembrane segment spans residues 332 to 352 (LWLLVLILVVSGLSAGMSIIP). The Cytoplasmic portion of the chain corresponds to 353 to 377 (TFPEILSCAHENGFEEGLSTLGLVS). The chain crosses the membrane as a helical span at residues 378–398 (GLFSAMWSIGAFMGPTLGGFL). Over 399–407 (YEKIGFEWA) the chain is Extracellular. Residues 408-428 (AAIQGLWALISGLAMGLFYLL) traverse the membrane as a helical segment. The Cytoplasmic segment spans residues 429–456 (EYSRRKRSKSQNILSTEEERTTLLPNET). Phosphoserine is present on Ser-438.

It belongs to the major facilitator superfamily. Expressed in various tissues including lung, placenta, adrenal gland, liver, testis, and brain.

It is found in the cytoplasmic vesicle. The protein resides in the secretory vesicle membrane. It localises to the secretory vesicle. Its subcellular location is the synaptic vesicle membrane. It catalyses the reaction spermine(in) + n H(+)(out) = spermine(out) + n H(+)(in). The enzyme catalyses spermidine(in) + n H(+)(out) = spermidine(out) + n H(+)(in). The catalysed reaction is serotonin(in) + n H(+)(out) = serotonin(out) + n H(+)(in). Functionally, proton-coupled polyamine antiporter involved in the translocation of polyamines from cytosol into secretory vesicles prior to their release via exocytosis. Uses the electrochemical proton gradient generated by a V-type proton-pumping ATPase to couple the efflux of protons with the uptake of a polyamine molecule. Facilitates vesicular storage of spermine and spermidine in astrocytes with an impact on glutamatergic neuronal transmission and memory formation. Upon antigen stimulation, regulates polyamine accumulation and release in mast cell secretory granules, which in turn potentiates mast cell degranulation and histamine secretion. This Homo sapiens (Human) protein is MFS-type transporter SLC18B1.